Here is a 100-residue protein sequence, read N- to C-terminus: Small ribosomal subunit protein uS14 (100 aa).

This sequence belongs to the universal ribosomal protein uS14 family. In terms of assembly, part of the 30S ribosomal subunit. Contacts proteins S3 and S10.

In terms of biological role, binds 16S rRNA, required for the assembly of 30S particles and may also be responsible for determining the conformation of the 16S rRNA at the A site. The polypeptide is Small ribosomal subunit protein uS14 (Prochlorococcus marinus (strain MIT 9301)).